A 502-amino-acid chain; its full sequence is Peroxisomal catalase (502 aa).

Catalysis depends on residues histidine 64 and asparagine 137. Residue tyrosine 347 participates in heme binding. The short motif at 500–502 (AKM) is the Microbody targeting signal element.

The protein belongs to the catalase family. Heme serves as cofactor.

The protein resides in the peroxisome matrix. The enzyme catalyses 2 H2O2 = O2 + 2 H2O. In terms of biological role, catalyzes the degradation of hydrogen peroxide (H(2)O(2)) generated by peroxisomal oxidases to water and oxygen, thereby protecting cells from the toxic effects of hydrogen peroxide. This is Peroxisomal catalase from Toxoplasma gondii.